The primary structure comprises 180 residues: MPLLNSVTTPYAEALLQVVNENSQTEEMVSEVKQLLELVNDSPELEKALSSPILETDAKKKIIIEIFSNKVNSSLLNFLKLLADRQRIGILTSILDRFLEIYRENSNIALATVTSAVELTDEQKGLITKKIINIAGTEKLELVTKIDPSLIGGFVASVGSKVIDASLASQIRKLGLTLSK.

It belongs to the ATPase delta chain family. In terms of assembly, F-type ATPases have 2 components, F(1) - the catalytic core - and F(0) - the membrane proton channel. F(1) has five subunits: alpha(3), beta(3), gamma(1), delta(1), epsilon(1). CF(0) has four main subunits: a(1), b(1), b'(1) and c(10-14). The alpha and beta chains form an alternating ring which encloses part of the gamma chain. F(1) is attached to F(0) by a central stalk formed by the gamma and epsilon chains, while a peripheral stalk is formed by the delta, b and b' chains.

Its subcellular location is the cellular thylakoid membrane. In terms of biological role, f(1)F(0) ATP synthase produces ATP from ADP in the presence of a proton or sodium gradient. F-type ATPases consist of two structural domains, F(1) containing the extramembraneous catalytic core and F(0) containing the membrane proton channel, linked together by a central stalk and a peripheral stalk. During catalysis, ATP synthesis in the catalytic domain of F(1) is coupled via a rotary mechanism of the central stalk subunits to proton translocation. Its function is as follows. This protein is part of the stalk that links CF(0) to CF(1). It either transmits conformational changes from CF(0) to CF(1) or is implicated in proton conduction. The chain is ATP synthase subunit delta from Prochlorococcus marinus (strain AS9601).